The sequence spans 214 residues: Outer-membrane lipoprotein LolB (214 aa).

A signal peptide spans 1 to 25 (MNNLKRFTKSIFSCIALSGLLFLGG). Cysteine 26 is lipidated: N-palmitoyl cysteine. The S-diacylglycerol cysteine moiety is linked to residue cysteine 26.

This sequence belongs to the LolB family. In terms of assembly, monomer.

It localises to the cell outer membrane. Plays a critical role in the incorporation of lipoproteins in the outer membrane after they are released by the LolA protein. The sequence is that of Outer-membrane lipoprotein LolB from Shewanella oneidensis (strain ATCC 700550 / JCM 31522 / CIP 106686 / LMG 19005 / NCIMB 14063 / MR-1).